The chain runs to 287 residues: CBK1 kinase activator protein MOB2 (287 aa).

The disordered stretch occupies residues 1-89; the sequence is MSFFNFKAFG…QQQEASERSE (89 aa). At Tyr33 the chain carries Phosphotyrosine. A compositionally biased stretch (low complexity) spans 34-44; that stretch reads SSPHSSNSRLS. Residues 45-56 are compositionally biased toward basic residues; that stretch reads LRNKHHSPKRHS. A Phosphoserine modification is found at Ser59. The span at 63–83 shows a compositional bias: low complexity; that stretch reads QKSTPQSQQLTSTTPQSQQQE. Thr76 is modified (phosphothreonine).

This sequence belongs to the MOB1/phocein family. As to quaternary structure, interacts with protein kinase CBK1 to form the RAM CBK1-MOB2 kinase complex.

Its subcellular location is the nucleus. The protein resides in the cytoplasm. Its function is as follows. Functions as an activator subunit for the CBK1 protein kinase. Part of the regulation of ACE2 activity and cellular morphogenesis (RAM) signaling network. Required for coordinating polarized cell growth during interphase with the onset of mitosis. Required for mother/daughter cell separation after cytokinesis. Also has a role in the prevention of nuclear export of ACE2 from the daughter cell nucleus after mitotic exit. It coordinates ACE2-dependent transcription with mitotic exit network activation. The sequence is that of CBK1 kinase activator protein MOB2 (MOB2) from Saccharomyces cerevisiae (strain ATCC 204508 / S288c) (Baker's yeast).